The primary structure comprises 140 residues: Inner membrane protein YphA (140 aa).

Topologically, residues methionine 1–arginine 13 are cytoplasmic. A helical transmembrane segment spans residues proline 14–proline 34. At lysine 35 to leucine 56 the chain is on the periplasmic side. Residues alanine 57–phenylalanine 77 traverse the membrane as a helical segment. The Cytoplasmic portion of the chain corresponds to threonine 78–arginine 79. The helical transmembrane segment at proline 80 to tryptophan 100 threads the bilayer. Topologically, residues aspartate 101–lysine 116 are periplasmic. The helical transmembrane segment at asparagine 117–leucine 137 threads the bilayer. Topologically, residues aspartate 138–arginine 140 are cytoplasmic.

This sequence belongs to the DoxX family.

Its subcellular location is the cell inner membrane. The polypeptide is Inner membrane protein YphA (yphA) (Escherichia coli (strain K12)).